A 571-amino-acid chain; its full sequence is Cyclic di-GMP phosphodiesterase TpdA (571 aa).

Helical transmembrane passes span Ile-155 to Asn-175, Val-321 to Ile-341, and Thr-395 to Ala-415. The EAL domain occupies His-344–Phe-571.

The protein localises to the cell inner membrane. The enzyme catalyses 3',3'-c-di-GMP + H2O = 5'-phosphoguanylyl(3'-&gt;5')guanosine + H(+). Cyclic di-GMP phosphodiesterase that plays an important role in modulating the global c-di-GMP pool. Its ability to alter the c-di-GMP pool has an effect on swimming motility, swarming motility and biofilm formation, multicellular behaviors that are important for the survival and dissemination of this environmental pathogen. Exhibits a dual function, namely, c-di-GMP degradation and modulation of its own expression. The polypeptide is Cyclic di-GMP phosphodiesterase TpdA (Vibrio parahaemolyticus serotype O3:K6 (strain RIMD 2210633)).